Consider the following 492-residue polypeptide: N-succinylglutamate 5-semialdehyde dehydrogenase (492 aa).

Gly-220–Gly-225 is a binding site for NAD(+). Residues Glu-243 and Cys-277 contribute to the active site.

The protein belongs to the aldehyde dehydrogenase family. AstD subfamily.

The enzyme catalyses N-succinyl-L-glutamate 5-semialdehyde + NAD(+) + H2O = N-succinyl-L-glutamate + NADH + 2 H(+). Its pathway is amino-acid degradation; L-arginine degradation via AST pathway; L-glutamate and succinate from L-arginine: step 4/5. Catalyzes the NAD-dependent reduction of succinylglutamate semialdehyde into succinylglutamate. This chain is N-succinylglutamate 5-semialdehyde dehydrogenase, found in Escherichia fergusonii (strain ATCC 35469 / DSM 13698 / CCUG 18766 / IAM 14443 / JCM 21226 / LMG 7866 / NBRC 102419 / NCTC 12128 / CDC 0568-73).